We begin with the raw amino-acid sequence, 910 residues long: Seizure 6-like protein 2 (910 aa).

Positions 1-27 (MGTPKAQHPPPSQLLLLILLSCAWIEG) are cleaved as a signal peptide. The Extracellular portion of the chain corresponds to 28 to 844 (LPLKEDEMMP…DPSRQLEGGN (817 aa)). Positions 70-152 (PGSDPDPTLA…PLRPEGGEEE (83 aa)) are disordered. Pro residues predominate over residues 123–145 (LTPPPGTTAPPPPGPASPVPPLR). A disulfide bridge links Cys-173 with Cys-202. The CUB 1 domain maps to 173–286 (CNNNISEGEG…NGFRIHYQAY (114 aa)). Asn-222 carries an N-linked (GlcNAc...) asparagine glycan. The 60-residue stretch at 288–347 (LSCGFPPRPAHGDVSVTDLHPGGTATFHCDSGYQLQGEETLICLNGTRPAWTGEPPSCTA) folds into the Sushi 1 domain. 12 disulfides stabilise this stretch: Cys-290-Cys-330, Cys-316-Cys-345, Cys-349-Cys-376, Cys-464-Cys-508, Cys-491-Cys-523, Cys-527-Cys-553, Cys-644-Cys-686, Cys-672-Cys-699, Cys-705-Cys-747, Cys-733-Cys-764, Cys-771-Cys-813, and Cys-799-Cys-828. Asn-332, Asn-373, Asn-473, and Asn-517 each carry an N-linked (GlcNAc...) asparagine glycan. Residues 349 to 459 (CGGTIHNATL…LLLSLRFEAF (111 aa)) form the CUB 2 domain. In terms of domain architecture, Sushi 2 spans 462-525 (DRCFPPFLAH…WNDTEPACKA (64 aa)). The region spanning 527–638 (CGGELSEPAG…QGFVLHFKEV (112 aa)) is the CUB 3 domain. 3 consecutive Sushi domains span residues 642–701 (DTCP…ACQK), 703–766 (MTCA…KCAL), and 769–830 (EPCL…LCKV). A helical membrane pass occupies residues 845-865 (LALAILLPLGLVIVLGIGVYI). Topologically, residues 866 to 910 (YYTKLQGKSLFGFSGSHSYSPITVESDFSNPLYEAGDTREYEVSI) are cytoplasmic.

Belongs to the SEZ6 family. In terms of tissue distribution, expressed exclusively in the brain, predominantly in the neurons. Wide expression in the gray matter of the brain with high levels in the olfactory bulb, anterior olfactory nuclei, hippocampal formation and cerebellar cortex. Detected diffusely and weakly in the white matter, such as the corpus callosum and cerebellar medulla. In the cerebellar cortex, intensely expressed in Purkinje cells (PC) and granule cells. Detected also in interneurons in the molecular layer. Up-regulated at two weeks after birth.

The protein resides in the cell membrane. Its subcellular location is the endoplasmic reticulum membrane. Functionally, may contribute to specialized endoplasmic reticulum functions in neurons. The chain is Seizure 6-like protein 2 (Sez6l2) from Mus musculus (Mouse).